Consider the following 401-residue polypeptide: 1-deoxy-D-xylulose 5-phosphate reductoisomerase (401 aa).

NADPH is bound by residues T11, G12, S13, I14, R38, N39, and N125. K126 lines the 1-deoxy-D-xylulose 5-phosphate pocket. An NADPH-binding site is contributed by E127. D151 contacts Mn(2+). 1-deoxy-D-xylulose 5-phosphate is bound by residues S152, E153, S179, and H202. Position 153 (E153) interacts with Mn(2+). G208 provides a ligand contact to NADPH. Positions 215, 220, 221, and 224 each coordinate 1-deoxy-D-xylulose 5-phosphate. E224 lines the Mn(2+) pocket.

This sequence belongs to the DXR family. Mg(2+) is required as a cofactor. The cofactor is Mn(2+).

It carries out the reaction 2-C-methyl-D-erythritol 4-phosphate + NADP(+) = 1-deoxy-D-xylulose 5-phosphate + NADPH + H(+). It participates in isoprenoid biosynthesis; isopentenyl diphosphate biosynthesis via DXP pathway; isopentenyl diphosphate from 1-deoxy-D-xylulose 5-phosphate: step 1/6. In terms of biological role, catalyzes the NADPH-dependent rearrangement and reduction of 1-deoxy-D-xylulose-5-phosphate (DXP) to 2-C-methyl-D-erythritol 4-phosphate (MEP). In Paraburkholderia phytofirmans (strain DSM 17436 / LMG 22146 / PsJN) (Burkholderia phytofirmans), this protein is 1-deoxy-D-xylulose 5-phosphate reductoisomerase.